The following is a 187-amino-acid chain: MPSEIAVEKKKLKNPPLQLHYLGDRVLRQPAKRITKVDDETRQLIRDMLQTMYSSDGIGLAAPQVGINKQLIVIDCEPDNPANPPLILINPTIKQVSREICSAQEGCLSIPGVYMDVKRPEVVEVAYKDENGRPQTLKATDLLGRCIQHEMDHLNGVVFVDRVDNSLTLAQELSKNGFSYQAVKPVA.

The Fe cation site is built by C107 and H149. The active site involves E150. H153 contributes to the Fe cation binding site.

It belongs to the polypeptide deformylase family. The cofactor is Fe(2+).

The enzyme catalyses N-terminal N-formyl-L-methionyl-[peptide] + H2O = N-terminal L-methionyl-[peptide] + formate. In terms of biological role, removes the formyl group from the N-terminal Met of newly synthesized proteins. Requires at least a dipeptide for an efficient rate of reaction. N-terminal L-methionine is a prerequisite for activity but the enzyme has broad specificity at other positions. This is Peptide deformylase 1 from Nostoc sp. (strain PCC 7120 / SAG 25.82 / UTEX 2576).